The sequence spans 1368 residues: Beclin-1-like protein A (1368 aa).

Low complexity-rich tracts occupy residues 24 to 57 (GSGS…NNGP) and 122 to 135 (NSII…SPSN). 5 disordered regions span residues 24–64 (GSGS…PSSE), 122–249 (NSII…SLMM), 331–431 (NKNN…STNS), 819–874 (TITP…NNNN), and 992–1048 (IDGN…NDNN). Residues 136-147 (AITRNNSFNMDP) show a composition bias toward polar residues. The span at 148 to 167 (NNNNNNNNNNNNNNNNNNNN) shows a compositional bias: low complexity. Over residues 168–177 (GEYMNSSIVF) the composition is skewed to polar residues. Residues 179-246 (NNVNNNNNNP…INNSVNSVNS (68 aa)) are compositionally biased toward low complexity. Low complexity-rich tracts occupy residues 992 to 1005 (IDGN…NDNN) and 1015 to 1048 (NNNN…NDNN). The stretch at 1047 to 1150 (NNYNFENEIN…AIRDQLERVS (104 aa)) forms a coiled coil.

The protein belongs to the beclin family.

It is found in the endosome membrane. Its function is as follows. Involved in autophagy. May be required to recruit the atg8-phosphatidylinositol conjugate and the atg12-atg5 conjugate to the pre-autophagosomal structure. Required for normal survival when exposed to pathogenic bacteria S.typhimurium by promoting autophagic degradation of intracellular S.typhimurium. The sequence is that of Beclin-1-like protein A (atg6A) from Dictyostelium discoideum (Social amoeba).